Reading from the N-terminus, the 235-residue chain is MSNTPIELKGSSFTLSVVHLHEAEPEVIRQALEDKIAQAPAFLKHAPVVINVSGLESPVNWPELHKIVTSTGLRIIGVSGCKDASLKVEIDRMGLPLLTEGKEKAVRPAPVEPATPSEPPQNANPITKTRLIDVPVRSGQRIYAPQCDLIVTSHVSAGAELIADGNIHVYGMMRGRALAGASGDREAQIFCTHLTAELVSIAGVYWLSDKIPAEFYGKAARLRLADNALTVQPLN.

The disordered stretch occupies residues 104 to 125 (KAVRPAPVEPATPSEPPQNANP). Over residues 110–119 (PVEPATPSEP) the composition is skewed to pro residues.

The protein belongs to the MinC family. Interacts with MinD and FtsZ.

Functionally, cell division inhibitor that blocks the formation of polar Z ring septums. Rapidly oscillates between the poles of the cell to destabilize FtsZ filaments that have formed before they mature into polar Z rings. Prevents FtsZ polymerization. This Salmonella agona (strain SL483) protein is Probable septum site-determining protein MinC.